The following is a 182-amino-acid chain: MKEVINSLNYLSNWPSAGSFEFNTNILETNIINISVVLGVLVYFGKGVLSNLLDNRKSKILNTIQNSEELCKGATDQLEKARARLWEVEKRVDEIRVNGYLQIEQEKENLIKAASANLKQLEDSKNETIFFEQQKVIDQVRQQISYQALQKALAIMNNCLNTDLHLRMIDYNIGRLRAKKPN.

The chain crosses the membrane as a helical span at residues Ile31–Leu53.

It belongs to the ATPase B chain family. In terms of assembly, F-type ATPases have 2 components, F(1) - the catalytic core - and F(0) - the membrane proton channel. F(1) has five subunits: alpha(3), beta(3), gamma(1), delta(1), epsilon(1). F(0) has four main subunits: a(1), b(1), b'(1) and c(10-14). The alpha and beta chains form an alternating ring which encloses part of the gamma chain. F(1) is attached to F(0) by a central stalk formed by the gamma and epsilon chains, while a peripheral stalk is formed by the delta, b and b' chains.

The protein resides in the plastid. Its subcellular location is the chloroplast thylakoid membrane. F(1)F(0) ATP synthase produces ATP from ADP in the presence of a proton or sodium gradient. F-type ATPases consist of two structural domains, F(1) containing the extramembraneous catalytic core and F(0) containing the membrane proton channel, linked together by a central stalk and a peripheral stalk. During catalysis, ATP synthesis in the catalytic domain of F(1) is coupled via a rotary mechanism of the central stalk subunits to proton translocation. Functionally, component of the F(0) channel, it forms part of the peripheral stalk, linking F(1) to F(0). The sequence is that of ATP synthase subunit b, chloroplastic from Welwitschia mirabilis (Tree tumbo).